Here is a 141-residue protein sequence, read N- to C-terminus: Large ribosomal subunit protein uL11 (141 aa).

It belongs to the universal ribosomal protein uL11 family. As to quaternary structure, part of the ribosomal stalk of the 50S ribosomal subunit. Interacts with L10 and the large rRNA to form the base of the stalk. L10 forms an elongated spine to which L12 dimers bind in a sequential fashion forming a multimeric L10(L12)X complex. One or more lysine residues are methylated.

Functionally, forms part of the ribosomal stalk which helps the ribosome interact with GTP-bound translation factors. This is Large ribosomal subunit protein uL11 from Streptococcus suis (strain 05ZYH33).